The chain runs to 106 residues: Cell division protein FtsB (106 aa).

Topologically, residues 1 to 3 (MGK) are cytoplasmic. A helical transmembrane segment spans residues 4-21 (LTLLLLVLLGWLQYSLWL). At 22–106 (GKNGIHDFVR…GTPSTQNNAQ (85 aa)) the chain is on the periplasmic side. Residues 31 to 62 (RVKEDVAAQEANNSTLKARNDQLFAEIDDLNG) are a coiled coil.

This sequence belongs to the FtsB family. Part of a complex composed of FtsB, FtsL and FtsQ.

The protein resides in the cell inner membrane. Essential cell division protein. May link together the upstream cell division proteins, which are predominantly cytoplasmic, with the downstream cell division proteins, which are predominantly periplasmic. The sequence is that of Cell division protein FtsB from Yersinia pseudotuberculosis serotype O:1b (strain IP 31758).